A 393-amino-acid polypeptide reads, in one-letter code: Methylthioribose-1-phosphate isomerase (393 aa).

Asp265 (proton donor) is an active-site residue.

The protein belongs to the eIF-2B alpha/beta/delta subunits family. MtnA subfamily.

It localises to the cytoplasm. It is found in the nucleus. It carries out the reaction 5-(methylsulfanyl)-alpha-D-ribose 1-phosphate = 5-(methylsulfanyl)-D-ribulose 1-phosphate. Its pathway is amino-acid biosynthesis; L-methionine biosynthesis via salvage pathway; L-methionine from S-methyl-5-thio-alpha-D-ribose 1-phosphate: step 1/6. Catalyzes the interconversion of methylthioribose-1-phosphate (MTR-1-P) into methylthioribulose-1-phosphate (MTRu-1-P). This chain is Methylthioribose-1-phosphate isomerase, found in Cryptococcus neoformans var. neoformans serotype D (strain JEC21 / ATCC MYA-565) (Filobasidiella neoformans).